The primary structure comprises 448 residues: Nicotinate phosphoribosyltransferase pncB1 (448 aa).

The segment at 1–21 is disordered; it reads MGPPPAARRREGEPDNQDPAG. His212 carries the post-translational modification Phosphohistidine. The tract at residues 353–372 is disordered; it reads RSSYKESPGGRKEALRRSRA.

The protein belongs to the NAPRTase family. Transiently phosphorylated on a His residue during the reaction cycle. Phosphorylation strongly increases the affinity for substrates and increases the rate of nicotinate D-ribonucleotide production. Dephosphorylation regenerates the low-affinity form of the enzyme, leading to product release.

It catalyses the reaction nicotinate + 5-phospho-alpha-D-ribose 1-diphosphate + ATP + H2O = nicotinate beta-D-ribonucleotide + ADP + phosphate + diphosphate. It functions in the pathway cofactor biosynthesis; NAD(+) biosynthesis; nicotinate D-ribonucleotide from nicotinate: step 1/1. Its function is as follows. Involved in the Preiss-Handler pathway, which is a recycling route that permits the salvage of free nicotinamide (NM) and nicotinic acid (Na) involved in the NAD biosynthesis. Catalyzes the synthesis of beta-nicotinate D-ribonucleotide from nicotinate and 5-phospho-D-ribose 1-phosphate at the expense of ATP. It is not able to use nicotinamide. PncB1 contributes to basal NAD level. The sequence is that of Nicotinate phosphoribosyltransferase pncB1 (pncB1) from Mycobacterium tuberculosis (strain ATCC 25618 / H37Rv).